Consider the following 181-residue polypeptide: NAD(P)H-quinone oxidoreductase subunit I, chloroplastic (181 aa).

4Fe-4S ferredoxin-type domains are found at residues glycine 52–glutamate 81 and lysine 92–glutamate 121. Residues cysteine 61, cysteine 64, cysteine 67, cysteine 71, cysteine 101, cysteine 104, cysteine 107, and cysteine 111 each coordinate [4Fe-4S] cluster.

Belongs to the complex I 23 kDa subunit family. NDH is composed of at least 16 different subunits, 5 of which are encoded in the nucleus. The cofactor is [4Fe-4S] cluster.

It localises to the plastid. The protein resides in the chloroplast thylakoid membrane. It carries out the reaction a plastoquinone + NADH + (n+1) H(+)(in) = a plastoquinol + NAD(+) + n H(+)(out). The enzyme catalyses a plastoquinone + NADPH + (n+1) H(+)(in) = a plastoquinol + NADP(+) + n H(+)(out). NDH shuttles electrons from NAD(P)H:plastoquinone, via FMN and iron-sulfur (Fe-S) centers, to quinones in the photosynthetic chain and possibly in a chloroplast respiratory chain. The immediate electron acceptor for the enzyme in this species is believed to be plastoquinone. Couples the redox reaction to proton translocation, and thus conserves the redox energy in a proton gradient. The protein is NAD(P)H-quinone oxidoreductase subunit I, chloroplastic of Zygnema circumcarinatum (Green alga).